The chain runs to 723 residues: Nicastrin (723 aa).

The first 16 residues, 1–16, serve as a signal peptide directing secretion; sequence MKKWLVIVLIIAGIRC. At 17–678 the chain is on the extracellular side; sequence DGFSDQVFRT…ESVNLYLMED (662 aa). 6 N-linked (GlcNAc...) asparagine glycosylation sites follow: N40, N181, N271, N328, N409, and N627. The helical transmembrane segment at 679 to 699 threads the bilayer; that stretch reads ASFEYTMILIAVISALLSIFA. The Cytoplasmic segment spans residues 700–723; that stretch reads VGRCSETTFIVDEGEPAAEGGEPL.

This sequence belongs to the nicastrin family. As to quaternary structure, component of the gamma-secretase complex, a complex probably composed of the presenilin homodimer (sel-12, hop-1 or spe-4), nicastrin (aph-2), aph-1 and pen-2.

It is found in the membrane. Essential subunit of the gamma-secretase complex, an endoprotease complex that catalyzes the intramembrane cleavage of integral membrane proteins such as Notch (glp-1 or lin-12). It may represents a stabilizing cofactor required for the assembly of the gamma-secretase complex. This Caenorhabditis elegans protein is Nicastrin (aph-2).